Reading from the N-terminus, the 258-residue chain is Ribosomal RNA large subunit methyltransferase E (258 aa).

The S-adenosyl-L-methionine site is built by Gly-58, Trp-60, Asp-78, Asp-96, and Asp-120. The Proton acceptor role is filled by Lys-160.

This sequence belongs to the class I-like SAM-binding methyltransferase superfamily. RNA methyltransferase RlmE family.

The protein localises to the cytoplasm. The enzyme catalyses uridine(2552) in 23S rRNA + S-adenosyl-L-methionine = 2'-O-methyluridine(2552) in 23S rRNA + S-adenosyl-L-homocysteine + H(+). Functionally, specifically methylates the uridine in position 2552 of 23S rRNA at the 2'-O position of the ribose in the fully assembled 50S ribosomal subunit. The polypeptide is Ribosomal RNA large subunit methyltransferase E (Methanococcus maripaludis (strain C5 / ATCC BAA-1333)).